The sequence spans 698 residues: Putative transposon gamma-delta 80.3 kDa protein (698 aa).

This chain is Putative transposon gamma-delta 80.3 kDa protein (tnpX), found in Escherichia coli (strain K12).